The primary structure comprises 407 residues: DNA primase DnaG (407 aa).

The Toprim domain occupies 172 to 248 (DWIIVVEGRA…HIDYVARAPP (77 aa)). Glu-178, Asp-222, and Asp-224 together coordinate Mg(2+). Positions 279 to 304 (AGAEKTEAAAPPPQQPTAPPAAPSQQ) are disordered. Residues 288 to 300 (APPPQQPTAPPAA) show a composition bias toward pro residues.

Belongs to the archaeal DnaG primase family. In terms of assembly, forms a ternary complex with MCM helicase and DNA. Component of the archaeal exosome complex. Mg(2+) serves as cofactor.

The enzyme catalyses ssDNA + n NTP = ssDNA/pppN(pN)n-1 hybrid + (n-1) diphosphate.. Functionally, RNA polymerase that catalyzes the synthesis of short RNA molecules used as primers for DNA polymerase during DNA replication. Also part of the exosome, which is a complex involved in RNA degradation. Acts as a poly(A)-binding protein that enhances the interaction between heteromeric, adenine-rich transcripts and the exosome. This Pyrobaculum calidifontis (strain DSM 21063 / JCM 11548 / VA1) protein is DNA primase DnaG.